The sequence spans 430 residues: Crotonyl-CoA carboxylase/reductase (430 aa).

This sequence belongs to the zinc-containing alcohol dehydrogenase family. Crotonyl-CoA carboxylase/reductase subfamily. In terms of assembly, homodimer. It depends on Despite some sequence similarity to zinc-containing alcohol dehydrogenases, this enzyme does not bind any metals. as a cofactor.

The enzyme catalyses (2S)-ethylmalonyl-CoA + NADP(+) = (2E)-butenoyl-CoA + CO2 + NADPH. The catalysed reaction is (S)-methylmalonyl-CoA + NADP(+) = acryloyl-CoA + CO2 + NADPH. It catalyses the reaction butanoyl-CoA + NADP(+) = (2E)-butenoyl-CoA + NADPH + H(+). In terms of biological role, catalyzes the NADPH-dependent reductive carboxylation of crotonyl-CoA ((2E)-butenoyl-CoA) to (2S)-ethylmalonyl-CoA, in the presence of CO2. This is a key reaction in the ethylmalonyl-CoA pathway for acetyl-CoA assimilation required for R.sphaeroides growth on acetate as sole carbon source. Is also able to accept acryloyl-CoA as an alternative substrate, yielding (2S)-methylmalonyl-CoA. To a lesser extent, when CO2 is absent, the enzyme also catalyzes the reduction of crotonyl-CoA to butanoyl-CoA. In Cereibacter sphaeroides (strain ATCC 17023 / DSM 158 / JCM 6121 / CCUG 31486 / LMG 2827 / NBRC 12203 / NCIMB 8253 / ATH 2.4.1.) (Rhodobacter sphaeroides), this protein is Crotonyl-CoA carboxylase/reductase.